The chain runs to 448 residues: tRNA modification GTPase MnmE (448 aa).

The (6S)-5-formyl-5,6,7,8-tetrahydrofolate site is built by Arg24, Glu81, and Lys120. Positions 216 to 373 (GLNVVLVGAP…LKRTLLREAG (158 aa)) constitute a TrmE-type G domain. Residue Asn226 coordinates K(+). Residues 226 to 231 (NVGKSS), 245 to 251 (TDIAGTT), and 270 to 273 (DTAG) each bind GTP. A Mg(2+)-binding site is contributed by Ser230. Thr245, Ile247, and Thr250 together coordinate K(+). Thr251 is a Mg(2+) binding site. Lys448 contributes to the (6S)-5-formyl-5,6,7,8-tetrahydrofolate binding site.

Belongs to the TRAFAC class TrmE-Era-EngA-EngB-Septin-like GTPase superfamily. TrmE GTPase family. In terms of assembly, homodimer. Heterotetramer of two MnmE and two MnmG subunits. K(+) is required as a cofactor.

The protein resides in the cytoplasm. Its function is as follows. Exhibits a very high intrinsic GTPase hydrolysis rate. Involved in the addition of a carboxymethylaminomethyl (cmnm) group at the wobble position (U34) of certain tRNAs, forming tRNA-cmnm(5)s(2)U34. The polypeptide is tRNA modification GTPase MnmE (Neisseria meningitidis serogroup A / serotype 4A (strain DSM 15465 / Z2491)).